The following is a 532-amino-acid chain: E3 ubiquitin-protein ligase MGRN1 (532 aa).

A lipid anchor (N-myristoyl glycine) is attached at Gly2. The RING-type zinc-finger motif lies at Glu277–Cys316. A Required for TSG101-binding motif is present at residues Pro384–Pro387. Phosphotyrosine is present on Tyr389. A disordered region spans residues Leu419–Leu518. The span at Gly422–Ser435 shows a compositional bias: polar residues. Phosphoserine is present on residues Ser428, Ser449, Ser452, and Ser501. The span at Glu442–Asp453 shows a compositional bias: acidic residues.

As to quaternary structure, interacts with MC1R and MC4R. Interacts with TSG101. Interacts with mislocalized cytosolically exposed PRNP; this interaction alters MGRN1 subcellular location and causes lysosomal enlargement. Post-translationally, autoubiquitinated in vitro. Widely expressed, with highest levels in brain, heart, kidney and liver. In the CNS, especially prominent in the Purkinje cells of the cerebellum. In the skin, expressed in the basal layer of the epidermis and hair follicles, primarily in the outer root sheath. Isoforms 1, 3, 4 and 5 are equally expressed in the liver. Isoforms 1, 3 and 4 are most abundant in brain, kidney and heart, respectively.

The protein resides in the early endosome. It is found in the cytoplasm. Its subcellular location is the cell membrane. The protein localises to the nucleus. The catalysed reaction is S-ubiquitinyl-[E2 ubiquitin-conjugating enzyme]-L-cysteine + [acceptor protein]-L-lysine = [E2 ubiquitin-conjugating enzyme]-L-cysteine + N(6)-ubiquitinyl-[acceptor protein]-L-lysine.. Its pathway is protein modification; protein ubiquitination. Functionally, E3 ubiquitin-protein ligase. Mediates TSG101 monoubiquitination at multiple sites. Plays a role in the regulation of endosome-to-lysosome trafficking. Impairs MC1R- and MC4R-signaling by competing with GNAS-binding to MCRs and inhibiting agonist-induced cAMP production. Does not inhibit ADRB2-signaling. Does not promote MC1R ubiquitination. Also acts as a negative regulator of hedgehog signaling. This chain is E3 ubiquitin-protein ligase MGRN1 (Mgrn1), found in Mus musculus (Mouse).